A 154-amino-acid polypeptide reads, in one-letter code: Endoribonuclease YbeY (154 aa).

Residues histidine 114, histidine 118, and histidine 124 each contribute to the Zn(2+) site.

The protein belongs to the endoribonuclease YbeY family. Zn(2+) serves as cofactor.

The protein resides in the cytoplasm. Functionally, single strand-specific metallo-endoribonuclease involved in late-stage 70S ribosome quality control and in maturation of the 3' terminus of the 16S rRNA. The polypeptide is Endoribonuclease YbeY (Histophilus somni (strain 2336) (Haemophilus somnus)).